The primary structure comprises 358 residues: Chorismate synthase (358 aa).

The tract at residues 39 to 61 (ADIQPFLDKRRPGQSRHTTQRQE) is disordered. Positions 48 and 54 each coordinate NADP(+). FMN-binding positions include 125–127 (RSS), 237–238 (NA), Gly-284, 299–303 (KPTSS), and Arg-325.

Belongs to the chorismate synthase family. In terms of assembly, homotetramer. It depends on FMNH2 as a cofactor.

The catalysed reaction is 5-O-(1-carboxyvinyl)-3-phosphoshikimate = chorismate + phosphate. Its pathway is metabolic intermediate biosynthesis; chorismate biosynthesis; chorismate from D-erythrose 4-phosphate and phosphoenolpyruvate: step 7/7. In terms of biological role, catalyzes the anti-1,4-elimination of the C-3 phosphate and the C-6 proR hydrogen from 5-enolpyruvylshikimate-3-phosphate (EPSP) to yield chorismate, which is the branch point compound that serves as the starting substrate for the three terminal pathways of aromatic amino acid biosynthesis. This reaction introduces a second double bond into the aromatic ring system. In Sphingopyxis alaskensis (strain DSM 13593 / LMG 18877 / RB2256) (Sphingomonas alaskensis), this protein is Chorismate synthase.